Here is a 561-residue protein sequence, read N- to C-terminus: PR domain zinc finger protein 14 (561 aa).

The segment at 1–20 (MALPPSGETQSQDKANYLPQ) is disordered. Over residues 7-20 (GETQSQDKANYLPQ) the composition is skewed to polar residues. The interval 184 to 373 (GFNFTEEELS…GVPMNLRVTE (190 aa)) is interaction with CBFA2T2. Positions 241–356 (EGLCLMQTSF…RNQELLVWYG (116 aa)) constitute an SET domain. Tyr355 is an S-adenosyl-L-methionine binding site. The C2H2-type 1; atypical zinc-finger motif lies at 390–416 (YRCERCGKVFTYKYYRDKHLKYTPCVD). 5 C2H2-type zinc fingers span residues 422–445 (FPCS…LHVH), 451–473 (YLCS…MRVH), 479–501 (YQCV…IRQH), 507–530 (FKCK…RRSH), and 536–558 (SSCD…MRLH).

This sequence belongs to the class V-like SAM-binding methyltransferase superfamily. As to quaternary structure, interacts with CBFA2T2. In terms of tissue distribution, restricted to embryonic stem cells and primordial germ cells. Not detected in epiblast-derived stem cells.

It is found in the nucleus. Its function is as follows. Transcription factor that has both positive and negative roles on transcription. Plays a role in cellular pluripotency. Essential for germ cell development at 2 levels: the reacquisition of potential pluripotency, including SOX2 up-regulation, and successful epigenetic reprogramming, characterized by EHMT1 repression. Its association with CBFA2T2 is required for the functions in pluripotency and germ cell formation. This chain is PR domain zinc finger protein 14 (Prdm14), found in Mus musculus (Mouse).